Reading from the N-terminus, the 89-residue chain is Small ribosomal subunit protein uS15 (89 aa).

Belongs to the universal ribosomal protein uS15 family. Part of the 30S ribosomal subunit. Forms a bridge to the 50S subunit in the 70S ribosome, contacting the 23S rRNA.

One of the primary rRNA binding proteins, it binds directly to 16S rRNA where it helps nucleate assembly of the platform of the 30S subunit by binding and bridging several RNA helices of the 16S rRNA. Functionally, forms an intersubunit bridge (bridge B4) with the 23S rRNA of the 50S subunit in the ribosome. In Chlorobaculum parvum (strain DSM 263 / NCIMB 8327) (Chlorobium vibrioforme subsp. thiosulfatophilum), this protein is Small ribosomal subunit protein uS15.